A 389-amino-acid polypeptide reads, in one-letter code: MATDALSIARDLVRCPSVTPADAGALGVLEKLLGDAGFEVHRVTFSEPGAADIDNLYARIGATGPHIAFAGHTDVVPPGDESAWTHGAFSGEVKDGFLYGRGTVDMKGGIACSAAATLEYLEAHGGRPGKDGNGSISFLITGDEEDIAVNGTVKLMQWAAARGEKFDHCVLGEPSNVAELGDCIKIGRRGSQSGTLYVEGVQGHVAYPHRASNPIPDIAALITALVSEPLDQGSAQFQPSNLAFTSVDVGNPANNVIPGQARAKFNVRFNDHHNQESLRALIEARVAKVSGNRIRTRIVWEPSNADVFVTRPGPFTDLVVAAIEEVTGRRPELNTGGGTSDARFIKDYCPVIEFGLVGQTMHQIDERAPVADLEKLTRIYHGVLDRYFA.

Residue His-72 coordinates Zn(2+). Asp-74 is an active-site residue. Asp-105 serves as a coordination point for Zn(2+). Glu-144 serves as the catalytic Proton acceptor. Zn(2+) is bound by residues Glu-145, Glu-173, and His-362.

The protein belongs to the peptidase M20A family. DapE subfamily. As to quaternary structure, homodimer. Zn(2+) is required as a cofactor. Requires Co(2+) as cofactor.

The catalysed reaction is N-succinyl-(2S,6S)-2,6-diaminopimelate + H2O = (2S,6S)-2,6-diaminopimelate + succinate. The protein operates within amino-acid biosynthesis; L-lysine biosynthesis via DAP pathway; LL-2,6-diaminopimelate from (S)-tetrahydrodipicolinate (succinylase route): step 3/3. Catalyzes the hydrolysis of N-succinyl-L,L-diaminopimelic acid (SDAP), forming succinate and LL-2,6-diaminopimelate (DAP), an intermediate involved in the bacterial biosynthesis of lysine and meso-diaminopimelic acid, an essential component of bacterial cell walls. The sequence is that of Succinyl-diaminopimelate desuccinylase from Nitrobacter hamburgensis (strain DSM 10229 / NCIMB 13809 / X14).